The following is a 691-amino-acid chain: Serotransferrin-2 (691 aa).

Residues 1–18 (MKLLLLSALLGCLATAYA) form the signal peptide. Transferrin-like domains lie at 25–329 (VKWC…SLKK) and 340–670 (IKWC…SLRK). Cysteines 28 and 50 form a disulfide. Fe(3+)-binding residues include aspartate 74 and tyrosine 104. Cystine bridges form between cysteine 127/cysteine 207, cysteine 172/cysteine 186, and cysteine 235/cysteine 249. 4 residues coordinate hydrogencarbonate: threonine 129, serine 134, glycine 136, and tryptophan 137. An N-linked (GlcNAc...) asparagine glycan is attached at asparagine 169. Tyrosine 201 contacts Fe(3+). Residue histidine 257 coordinates Fe(3+). 2 disulfides stabilise this stretch: cysteine 343–cysteine 379 and cysteine 353–cysteine 370. Fe(3+) contacts are provided by aspartate 394 and tyrosine 428. 7 cysteine pairs are disulfide-bonded: cysteine 404–cysteine 682, cysteine 419–cysteine 643, cysteine 451–cysteine 530, cysteine 475–cysteine 671, cysteine 485–cysteine 499, cysteine 496–cysteine 513, and cysteine 570–cysteine 584. The hydrogencarbonate site is built by threonine 453, arginine 457, alanine 459, and glycine 460. Tyrosine 524 lines the Fe(3+) pocket. Histidine 592 contributes to the Fe(3+) binding site.

The protein belongs to the transferrin family. Monomer. As to expression, abundant in liver and serum with smaller amounts found in the stomach and kidney.

The protein localises to the secreted. In terms of biological role, transferrins are iron binding transport proteins which can bind two Fe(3+) ions in association with the binding of an anion, usually bicarbonate. It is responsible for the transport of iron from sites of absorption and heme degradation to those of storage and utilization. Serum transferrin may also have a further role in stimulating cell proliferation. This Salmo salar (Atlantic salmon) protein is Serotransferrin-2 (tf2).